Reading from the N-terminus, the 409-residue chain is Salivary endonuclease (409 aa).

Residues 1–20 (MHLQLNLCAILLSVLNGIQG) form the signal peptide. N-linked (GlcNAc...) asparagine glycans are attached at residues N37 and N102. H216 serves as the catalytic Proton acceptor. A Mg(2+)-binding site is contributed by N246. N-linked (GlcNAc...) asparagine glycosylation is found at N351 and N381.

It belongs to the DNA/RNA non-specific endonuclease family. It depends on Mg(2+) as a cofactor. Salivary gland.

The protein localises to the secreted. Functionally, hydrolyzes single-stranded and double-stranded DNA with little sequence specificity. Inhibits contact pathway of blood coagulation in the host by preventing activation of coagulation factor XII (F12) triggered by soluble DNA. Modestly up-regulates expression of CSF2, CXCL1 and CXCL8 in cultured human dermal microvascular endothelial cells. At higher doses promotes host neutrophil recruitment at the injection site in mouse model. Its function is as follows. (Microbial infection) Increases Leishmania major survival in the host by disrupting parasite-induced neutrophil extracellular traps. Exacerbates L.major parasite infectivity and increases cutaneous lesions in mouse model. This is Salivary endonuclease from Lutzomyia longipalpis (Sand fly).